The sequence spans 502 residues: ATP synthase subunit alpha (502 aa).

Residue 169-176 participates in ATP binding; the sequence is GDRQTGKT.

This sequence belongs to the ATPase alpha/beta chains family. As to quaternary structure, F-type ATPases have 2 components, CF(1) - the catalytic core - and CF(0) - the membrane proton channel. CF(1) has five subunits: alpha(3), beta(3), gamma(1), delta(1), epsilon(1). CF(0) has three main subunits: a(1), b(2) and c(9-12). The alpha and beta chains form an alternating ring which encloses part of the gamma chain. CF(1) is attached to CF(0) by a central stalk formed by the gamma and epsilon chains, while a peripheral stalk is formed by the delta and b chains.

Its subcellular location is the cell membrane. The catalysed reaction is ATP + H2O + 4 H(+)(in) = ADP + phosphate + 5 H(+)(out). Its function is as follows. Produces ATP from ADP in the presence of a proton gradient across the membrane. The alpha chain is a regulatory subunit. The polypeptide is ATP synthase subunit alpha (Exiguobacterium sibiricum (strain DSM 17290 / CCUG 55495 / CIP 109462 / JCM 13490 / 255-15)).